The chain runs to 626 residues: Chaperone protein DnaK (626 aa).

Threonine 197 carries the phosphothreonine; by autocatalysis modification. Positions 598–612 (AQGEQGQAAQPQAET) are enriched in low complexity. Residues 598-626 (AQGEQGQAAQPQAETQGDDVQDVEFEEVK) are disordered. Acidic residues predominate over residues 613–626 (QGDDVQDVEFEEVK).

Belongs to the heat shock protein 70 family.

Acts as a chaperone. This Flavobacterium psychrophilum (strain ATCC 49511 / DSM 21280 / CIP 103535 / JIP02/86) protein is Chaperone protein DnaK.